The following is a 210-amino-acid chain: Protein GrpE (210 aa).

Residues M1–E31 are disordered. The span at E12–E21 shows a compositional bias: basic and acidic residues.

This sequence belongs to the GrpE family. Homodimer.

The protein resides in the cytoplasm. Participates actively in the response to hyperosmotic and heat shock by preventing the aggregation of stress-denatured proteins, in association with DnaK and GrpE. It is the nucleotide exchange factor for DnaK and may function as a thermosensor. Unfolded proteins bind initially to DnaJ; upon interaction with the DnaJ-bound protein, DnaK hydrolyzes its bound ATP, resulting in the formation of a stable complex. GrpE releases ADP from DnaK; ATP binding to DnaK triggers the release of the substrate protein, thus completing the reaction cycle. Several rounds of ATP-dependent interactions between DnaJ, DnaK and GrpE are required for fully efficient folding. This chain is Protein GrpE, found in Chromohalobacter salexigens (strain ATCC BAA-138 / DSM 3043 / CIP 106854 / NCIMB 13768 / 1H11).